Consider the following 434-residue polypeptide: F-box only protein 15 (434 aa).

Residues 1–41 (MPSEILLKIFSYLDAVSLLCAGCVSRRFYHLANDNFIWIRI) form the F-box domain.

As to quaternary structure, directly interacts with SKP1 and CUL1.

Its function is as follows. Substrate-recognition component of the SCF (SKP1-CUL1-F-box protein)-type E3 ubiquitin ligase complex. This Macaca fascicularis (Crab-eating macaque) protein is F-box only protein 15 (FBXO15).